A 43-amino-acid chain; its full sequence is Protein PsbN (43 aa).

A helical membrane pass occupies residues Thr5–Phe27.

It belongs to the PsbN family.

Its subcellular location is the plastid. The protein localises to the chloroplast thylakoid membrane. May play a role in photosystem I and II biogenesis. In Thuja plicata (Western red-cedar), this protein is Protein PsbN.